We begin with the raw amino-acid sequence, 239 residues long: MATPHINAEMGDFADVVLMPGDPLRAKFIAETFLQDVREVNNVRGMLGFTGTYKGRKISVMGHGMGIPSCSIYAKELITDFGVKKIIRVGSCGAVRTDVKLRDVVIGMGACTDSKVNRMRFKDHDYAAIADFEMTRNAVDAAKAKGVNVRVGNLFSADLFYTPDPQMFDVMEKYGILGVEMEAAGIYGVAAEFGAKALTICTVSDHIRTGEQTTAAERQTTFNDMIEIALESVLLGDNA.

Residue histidine 5 participates in a purine D-ribonucleoside binding. Phosphate contacts are provided by residues glycine 21, arginine 25, arginine 44, and 88–91 (RVGS). Residues 180-182 (EME) and 204-205 (SD) each bind a purine D-ribonucleoside. The active-site Proton donor is the aspartate 205.

Belongs to the PNP/UDP phosphorylase family. Homohexamer; trimer of homodimers.

The enzyme catalyses a purine D-ribonucleoside + phosphate = a purine nucleobase + alpha-D-ribose 1-phosphate. It catalyses the reaction a purine 2'-deoxy-D-ribonucleoside + phosphate = a purine nucleobase + 2-deoxy-alpha-D-ribose 1-phosphate. Functionally, catalyzes the reversible phosphorolytic breakdown of the N-glycosidic bond in the beta-(deoxy)ribonucleoside molecules, with the formation of the corresponding free purine bases and pentose-1-phosphate. The sequence is that of Purine nucleoside phosphorylase DeoD-type from Yersinia pseudotuberculosis serotype O:1b (strain IP 31758).